Here is a 498-residue protein sequence, read N- to C-terminus: Angiopoietin-1 (498 aa).

An N-terminal signal peptide occupies residues Met1–Thr15. The stretch at Gln81–Ala119 forms a coiled coil. Asn92, Asn122, Asn154, Asn243, and Asn295 each carry an N-linked (GlcNAc...) asparagine glycan. Positions Leu153–Leu261 form a coiled coil. The Fibrinogen C-terminal domain occupies Arg277–Asp497. Disulfide bonds link Cys286-Cys315 and Cys439-Cys452.

As to quaternary structure, homooligomer. Interacts with TEK/TIE2. Interacts with SVEP1/polydom. Interacts with THBD; this interaction significantly inhibits the generation of activated PC and TAFIa/CPB2 by the thrombin/thrombomodulin complex. Post-translationally, glycosylated.

It localises to the secreted. Its function is as follows. Binds and activates TEK/TIE2 receptor by inducing its dimerization and tyrosine phosphorylation. Plays an important role in the regulation of angiogenesis, endothelial cell survival, proliferation, migration, adhesion and cell spreading, reorganization of the actin cytoskeleton, but also maintenance of vascular quiescence. Required for normal angiogenesis and heart development during embryogenesis. After birth, activates or inhibits angiogenesis, depending on the context. Inhibits angiogenesis and promotes vascular stability in quiescent vessels, where endothelial cells have tight contacts. In quiescent vessels, ANGPT1 oligomers recruit TEK to cell-cell contacts, forming complexes with TEK molecules from adjoining cells, and this leads to preferential activation of phosphatidylinositol 3-kinase and the AKT1 signaling cascades. In migrating endothelial cells that lack cell-cell adhesions, ANGT1 recruits TEK to contacts with the extracellular matrix, leading to the formation of focal adhesion complexes, activation of PTK2/FAK and of the downstream kinases MAPK1/ERK2 and MAPK3/ERK1, and ultimately to the stimulation of sprouting angiogenesis. Mediates blood vessel maturation/stability. Implicated in endothelial developmental processes later and distinct from that of VEGF. Appears to play a crucial role in mediating reciprocal interactions between the endothelium and surrounding matrix and mesenchyme. This is Angiopoietin-1 (ANGPT1) from Homo sapiens (Human).